The chain runs to 326 residues: tRNA N6-adenosine threonylcarbamoyltransferase (326 aa).

Histidine 113 and histidine 117 together coordinate Fe cation. Substrate is bound by residues 134–138, aspartate 167, glycine 180, and asparagine 267; that span reads VASGG. Fe cation is bound at residue aspartate 291.

It belongs to the KAE1 / TsaD family. Fe(2+) serves as cofactor.

It localises to the cytoplasm. The enzyme catalyses L-threonylcarbamoyladenylate + adenosine(37) in tRNA = N(6)-L-threonylcarbamoyladenosine(37) in tRNA + AMP + H(+). Its function is as follows. Required for the formation of a threonylcarbamoyl group on adenosine at position 37 (t(6)A37) in tRNAs that read codons beginning with adenine. Is involved in the transfer of the threonylcarbamoyl moiety of threonylcarbamoyl-AMP (TC-AMP) to the N6 group of A37, together with TsaE and TsaB. TsaD likely plays a direct catalytic role in this reaction. The chain is tRNA N6-adenosine threonylcarbamoyltransferase from Thermus thermophilus (strain ATCC 27634 / DSM 579 / HB8).